Here is a 1020-residue protein sequence, read N- to C-terminus: Phosphatidylinositol 3-kinase VPS34 (1020 aa).

The C2 PI3K-type domain maps to 49–210 (LSTKFEDPTV…NWLDKMVLPK (162 aa)). One can recognise a PIK helical domain in the interval 331-577 (DKELKPTPQL…DGPIKIYMDI (247 aa)). The PI3K/PI4K catalytic domain maps to 666-1004 (YPEESSVFKS…LINDSVNAFL (339 aa)). The segment at 672–678 (VFKSSLA) is G-loop. Residues 873–881 (GVGDRHLDN) are catalytic loop. An activation loop region spans residues 892 to 913 (HADFGYILGRDPKPFPPLMKLP).

The protein belongs to the PI3/PI4-kinase family. As to quaternary structure, component of the autophagy-specific VPS34 PI3-kinase complex I composed of at least VPS15, VPS30, VPS34, and of the VPS34 PI3-kinase complex II composed of VPS15, VPS30, VPS34 and VPS38. Interacts with VMNA7. In terms of processing, autophosphorylated.

It is found in the golgi apparatus. It localises to the trans-Golgi network membrane. Its subcellular location is the endosome membrane. It carries out the reaction a 1,2-diacyl-sn-glycero-3-phospho-(1D-myo-inositol) + ATP = a 1,2-diacyl-sn-glycero-3-phospho-(1D-myo-inositol-3-phosphate) + ADP + H(+). Its function is as follows. Multifunctional phosphatidylinositol 3-kinase involved in acidification of vacuoles, pH-dependent cell growth, and autophagocytosis. Plays an important role in protein transport and virulence. Component of the autophagy-specific VPS34 PI3-kinase complex I essential to recruit the ATG8-phosphatidylinositol conjugate and the ATG12-ATG5 conjugate to the pre-autophagosomal structure. Also involved in endosome-to-Golgi retrograde transport as part of the VPS34 PI3-kinase complex II. This second complex is required for the endosome-to-Golgi retrieval of PEP1 and KEX2, and the recruitment of VPS5 and VPS7, two components of the retromer complex, to endosomal membranes (probably through the synthesis of a specific pool of phosphatidylinositol 3-phosphate recruiting the retromer to the endosomes). Finally, it might also be involved in ethanol tolerance and cell wall integrity. The polypeptide is Phosphatidylinositol 3-kinase VPS34 (Candida albicans (Yeast)).